Here is a 791-residue protein sequence, read N- to C-terminus: Phenylalanine--tRNA ligase beta subunit (791 aa).

Residues 39-148 (AADFSGVVVA…ADAPVGADIR (110 aa)) form the tRNA-binding domain. One can recognise a B5 domain in the interval 401 to 476 (PLRAPVRLRE…RVYGYDAIPR (76 aa)). 4 residues coordinate Mg(2+): aspartate 454, aspartate 460, glutamate 463, and glutamate 464. Residues 697-790 (SRFPLVRRDL…LAADFGAKLR (94 aa)) form the FDX-ACB domain.

It belongs to the phenylalanyl-tRNA synthetase beta subunit family. Type 1 subfamily. As to quaternary structure, tetramer of two alpha and two beta subunits. Requires Mg(2+) as cofactor.

Its subcellular location is the cytoplasm. The enzyme catalyses tRNA(Phe) + L-phenylalanine + ATP = L-phenylalanyl-tRNA(Phe) + AMP + diphosphate + H(+). This is Phenylalanine--tRNA ligase beta subunit from Methylococcus capsulatus (strain ATCC 33009 / NCIMB 11132 / Bath).